The chain runs to 146 residues: uncharacterized protein (146 aa).

In terms of domain architecture, N-acetyltransferase spans 7 to 146; the sequence is LDINYKTDEL…DGHDVLVWTP (140 aa).

This is an uncharacterized protein from Staphylococcus saprophyticus subsp. saprophyticus (strain ATCC 15305 / DSM 20229 / NCIMB 8711 / NCTC 7292 / S-41).